A 301-amino-acid chain; its full sequence is Probable alpha-L-glutamate ligase (301 aa).

Positions Leu-104–Glu-287 constitute an ATP-grasp domain. ATP contacts are provided by residues Lys-141, Glu-178–Tyr-179, Asp-187, and Arg-211–Asn-213. Asp-248, Glu-260, and Asn-262 together coordinate Mg(2+). Residues Asp-248, Glu-260, and Asn-262 each coordinate Mn(2+).

This sequence belongs to the RimK family. Mg(2+) serves as cofactor. Requires Mn(2+) as cofactor.

The polypeptide is Probable alpha-L-glutamate ligase (Pseudomonas syringae pv. syringae (strain B728a)).